A 131-amino-acid polypeptide reads, in one-letter code: Small ribosomal subunit protein uS8 (131 aa).

It belongs to the universal ribosomal protein uS8 family. Part of the 30S ribosomal subunit. Contacts proteins S5 and S12.

In terms of biological role, one of the primary rRNA binding proteins, it binds directly to 16S rRNA central domain where it helps coordinate assembly of the platform of the 30S subunit. In Rhizorhabdus wittichii (strain DSM 6014 / CCUG 31198 / JCM 15750 / NBRC 105917 / EY 4224 / RW1) (Sphingomonas wittichii), this protein is Small ribosomal subunit protein uS8.